The primary structure comprises 224 residues: PHD finger-containing protein 5 (224 aa).

Residues 31–81 (KKPCEVCGSDANELLMMTCFMCRDTREHTYCARVMFQRVPRLWICEECRDF) form a PHD-type zinc finger. Positions 34, 37, 49, 52, 58, 61, 75, and 78 each coordinate Zn(2+). Residues 116 to 137 (PRTNQVVDNHQDPPIDQTDPSS) are disordered.

As to quaternary structure, interacts directly with AIPP3/BDT1.

In terms of biological role, together with AIPP3/BDT1, cooperates to form a BAH-PHD bivalent histone reader complex able to read histone H3 lysine 27 trimethylation (H3K27me3) histone marks in order to regulate transcription, especially to prevent early flowering; promotes AIPP3/BDT1 binding to H3K27me3. The sequence is that of PHD finger-containing protein 5 from Arabidopsis thaliana (Mouse-ear cress).